Here is a 110-residue protein sequence, read N- to C-terminus: UPF0122 protein STER_0914 (110 aa).

The protein belongs to the UPF0122 family.

Functionally, might take part in the signal recognition particle (SRP) pathway. This is inferred from the conservation of its genetic proximity to ftsY/ffh. May be a regulatory protein. In Streptococcus thermophilus (strain ATCC BAA-491 / LMD-9), this protein is UPF0122 protein STER_0914.